We begin with the raw amino-acid sequence, 240 residues long: Homeobox-leucine zipper protein HOX14 (240 aa).

The segment at 26–64 (SGEVQGERPRARRRRRRGARCVGGGGGGGEVDGGDPKKR) is disordered. Over residues 35–44 (RARRRRRRGA) the composition is skewed to basic residues. Positions 46-56 (CVGGGGGGGEV) are enriched in gly residues. The homeobox DNA-binding region spans 59-118 (GDPKKRRLSDEQVEMLELSFREERKLETGRKVHLASELGLDPKQVAVWFQNRRARHKSKL). Residues 108–167 (QNRRARHKSKLLEEEFSKLKHAHDAAILHKCHLENEVLRLKERLVVAEEEVRRLRSAAGS) adopt a coiled-coil conformation.

Belongs to the HD-ZIP homeobox family. Class I subfamily. In terms of tissue distribution, expressed in roots, stems, leaf blades and panicles.

It localises to the nucleus. Probable transcription factor. The sequence is that of Homeobox-leucine zipper protein HOX14 (HOX14) from Oryza sativa subsp. japonica (Rice).